Reading from the N-terminus, the 1473-residue chain is G8 domain-containing protein DDB_G0286311 (1473 aa).

An N-terminal signal peptide occupies residues 1–21 (MKRFFIVILFILLVCIFNVKS). Residues 105–125 (IVLMIATITGSLLFIRFNIGF) form a helical membrane-spanning segment. The N-linked (GlcNAc...) asparagine glycan is linked to Asn-126. Residues 130 to 150 (TLIILIIGTIFLIGSSHSITL) form a helical membrane-spanning segment. Asn-203, Asn-241, and Asn-275 each carry an N-linked (GlcNAc...) asparagine glycan. Positions 298–375 (TGTTPTTTPT…PTTTPTTTPT (78 aa)) are enriched in low complexity. The disordered stretch occupies residues 298–400 (TGTTPTTTPT…SSSPSSPSFS (103 aa)). Residues 376–389 (DSCPTTSTWRPTMA) show a composition bias toward polar residues. The segment covering 390 to 400 (SSSSPSSPSFS) has biased composition (low complexity). 10 N-linked (GlcNAc...) asparagine glycosylation sites follow: Asn-444, Asn-637, Asn-680, Asn-1078, Asn-1088, Asn-1176, Asn-1206, Asn-1225, Asn-1389, and Asn-1424. The G8 domain maps to 626 to 754 (SIWSSGIVPL…YHNTWSKLST (129 aa)).

The protein belongs to the comF family.

Its subcellular location is the membrane. The protein is G8 domain-containing protein DDB_G0286311 of Dictyostelium discoideum (Social amoeba).